Reading from the N-terminus, the 113-residue chain is Large ribosomal subunit protein uL22 (113 aa).

Belongs to the universal ribosomal protein uL22 family. In terms of assembly, part of the 50S ribosomal subunit.

In terms of biological role, this protein binds specifically to 23S rRNA; its binding is stimulated by other ribosomal proteins, e.g. L4, L17, and L20. It is important during the early stages of 50S assembly. It makes multiple contacts with different domains of the 23S rRNA in the assembled 50S subunit and ribosome. Its function is as follows. The globular domain of the protein is located near the polypeptide exit tunnel on the outside of the subunit, while an extended beta-hairpin is found that lines the wall of the exit tunnel in the center of the 70S ribosome. This is Large ribosomal subunit protein uL22 from Herpetosiphon aurantiacus (strain ATCC 23779 / DSM 785 / 114-95).